Reading from the N-terminus, the 708-residue chain is Elongation factor G (708 aa).

The tr-type G domain maps to Met-9 to Glu-289. GTP contacts are provided by residues Ala-18 to Thr-25, Asp-86 to His-90, and Asn-140 to Asp-143.

The protein belongs to the TRAFAC class translation factor GTPase superfamily. Classic translation factor GTPase family. EF-G/EF-2 subfamily.

The protein localises to the cytoplasm. Functionally, catalyzes the GTP-dependent ribosomal translocation step during translation elongation. During this step, the ribosome changes from the pre-translocational (PRE) to the post-translocational (POST) state as the newly formed A-site-bound peptidyl-tRNA and P-site-bound deacylated tRNA move to the P and E sites, respectively. Catalyzes the coordinated movement of the two tRNA molecules, the mRNA and conformational changes in the ribosome. This chain is Elongation factor G, found in Parabacteroides distasonis (strain ATCC 8503 / DSM 20701 / CIP 104284 / JCM 5825 / NCTC 11152).